A 160-amino-acid polypeptide reads, in one-letter code: S-ribosylhomocysteine lyase (160 aa).

Residues H57, H61, and C127 each contribute to the Fe cation site.

Belongs to the LuxS family. As to quaternary structure, homodimer. Requires Fe cation as cofactor.

It carries out the reaction S-(5-deoxy-D-ribos-5-yl)-L-homocysteine = (S)-4,5-dihydroxypentane-2,3-dione + L-homocysteine. Involved in the synthesis of autoinducer 2 (AI-2) which is secreted by bacteria and is used to communicate both the cell density and the metabolic potential of the environment. The regulation of gene expression in response to changes in cell density is called quorum sensing. Catalyzes the transformation of S-ribosylhomocysteine (RHC) to homocysteine (HC) and 4,5-dihydroxy-2,3-pentadione (DPD). This chain is S-ribosylhomocysteine lyase, found in Streptococcus thermophilus (strain CNRZ 1066).